The primary structure comprises 278 residues: uncharacterized protein (278 aa).

The segment covering 1–11 has biased composition (basic and acidic residues); that stretch reads MMIHIHQDKKM. 2 disordered regions span residues 1 to 107 and 206 to 278; these read MMIH…RYFK and KVSA…KASR. Over residues 62-94 the composition is skewed to low complexity; sequence KQSGGKNAKSGSKSAKSGSKSAKSGSKTSKTQS. The segment covering 97-107 has biased composition (basic and acidic residues); it reads KGDESRDRYFK. Residues 249-260 are compositionally biased toward polar residues; the sequence is SAKNAKSTGNKK. Positions 264–278 are enriched in low complexity; that stretch reads KSAGAKKAPAAKASR.

This is an uncharacterized protein from Acanthamoeba polyphaga mimivirus (APMV).